Reading from the N-terminus, the 203-residue chain is Galactoside O-acetyltransferase (203 aa).

Substrate-binding residues include D17, S71, N85, and D93. N85 lines the acetyl-CoA pocket. Catalysis depends on H115, which acts as the Proton donor/acceptor. Acetyl-CoA contacts are provided by residues S142, A160, 165 to 166, R180, and R183; that span reads TK.

Belongs to the transferase hexapeptide repeat family. As to quaternary structure, homotrimer. Post-translationally, the N-terminus of this protein is heterogeneous because the initiator methionine is only partially cleaved.

The protein localises to the cytoplasm. The enzyme catalyses a beta-D-galactoside + acetyl-CoA = a 6-acetyl-beta-D-galactoside + CoA. Its function is as follows. Catalyzes the CoA-dependent transfer of an acetyl group to the 6-O-methyl position of a range of galactosides, glucosides, and lactosides. May assist cellular detoxification by acetylating non-metabolizable pyranosides, thereby preventing their reentry into the cell. In Escherichia coli (strain K12), this protein is Galactoside O-acetyltransferase (lacA).